The sequence spans 116 residues: uncharacterized protein (116 aa).

2 helical membrane-spanning segments follow: residues 24-44 (VPFAAAGGYPISFLFIKVLTA) and 70-90 (VILTHFLVPIFFFLFQYIILS).

The protein resides in the membrane. This is an uncharacterized protein from Saccharomyces cerevisiae (strain ATCC 204508 / S288c) (Baker's yeast).